A 359-amino-acid chain; its full sequence is Phospho-N-acetylmuramoyl-pentapeptide-transferase (359 aa).

The next 10 helical transmembrane spans lie at 27–47 (IGAA…FIRT), 71–91 (VPTM…LLWA), 93–113 (LDNP…MIGA), 134–154 (LLLQ…HPGY), 170–190 (LGWF…NAVN), 203–223 (MVVS…VVLA), 234–254 (SGEL…FLWF), 262–282 (FMGD…AIII), 286–306 (FLLA…MLQV), and 336–356 (KVVV…IATL).

Belongs to the glycosyltransferase 4 family. MraY subfamily. The cofactor is Mg(2+).

The protein localises to the cell inner membrane. It carries out the reaction UDP-N-acetyl-alpha-D-muramoyl-L-alanyl-gamma-D-glutamyl-meso-2,6-diaminopimeloyl-D-alanyl-D-alanine + di-trans,octa-cis-undecaprenyl phosphate = di-trans,octa-cis-undecaprenyl diphospho-N-acetyl-alpha-D-muramoyl-L-alanyl-D-glutamyl-meso-2,6-diaminopimeloyl-D-alanyl-D-alanine + UMP. Its pathway is cell wall biogenesis; peptidoglycan biosynthesis. Functionally, catalyzes the initial step of the lipid cycle reactions in the biosynthesis of the cell wall peptidoglycan: transfers peptidoglycan precursor phospho-MurNAc-pentapeptide from UDP-MurNAc-pentapeptide onto the lipid carrier undecaprenyl phosphate, yielding undecaprenyl-pyrophosphoryl-MurNAc-pentapeptide, known as lipid I. This Desulfotalea psychrophila (strain LSv54 / DSM 12343) protein is Phospho-N-acetylmuramoyl-pentapeptide-transferase.